Here is a 354-residue protein sequence, read N- to C-terminus: MMNNNGNQVSNLSNALRQVNIGNRNSNTTTDQSNINFEFSTGVNNNNNNNSSSNNNNVQNNNSGRNGSQNNDNENNIKNTLEQHRQQQQAFSDMSHVEYSRITKFFQEQPLEGYTLFSHRSAPNGFKVAIVLSELGFHYNTIFLDFNLGEHRAPEFVSVNPNARVPALIDHGMDNLSIWESGAILLHLVNKYYKETGNPLLWSDDLADQSQINAWLFFQTSGHAPMIGQALHFRYFHSQKIASAVERYTDEVRRVYGVVEMALAERREALVMELDTENAAAYSAGTTPMSQSRFFDYPVWLVGDKLTIADLAFVPWNNVVDRIGINIKIEFPEVYKWTKHMMRRPAVIKALRGE.

Met2 carries the N-acetylmethionine modification. Residues 2 to 89 (MNNNGNQVSN…TLEQHRQQQQ (88 aa)) form a prion domain (PrD) region. Polar residues predominate over residues 22–42 (GNRNSNTTTDQSNINFEFSTG). The interval 22 to 76 (GNRNSNTTTDQSNINFEFSTGVNNNNNNNSSSNNNNVQNNNSGRNGSQNNDNENN) is disordered. The segment covering 43 to 73 (VNNNNNNNSSSNNNNVQNNNSGRNGSQNNDN) has biased composition (low complexity). The region spanning 112 to 196 (EGYTLFSHRS…HLVNKYYKET (85 aa)) is the GST N-terminal domain. Glutathione-binding positions include Asn124, His151, 164–165 (RV), and 180–181 (ES). The region spanning 205–354 (DLADQSQINA…PAVIKALRGE (150 aa)) is the GST C-terminal domain.

The protein belongs to the GST superfamily. As to quaternary structure, homodimer. Interacts with NNK1.

It localises to the cytoplasm. It carries out the reaction 2 glutathione + H2O2 = glutathione disulfide + 2 H2O. Plays an important role in nitrogen catabolite repression. Down-regulates the expression of many genes involved in nitrogen utilization by inhibiting the GATA transcriptional activators GLN3 and GAT1. Under good nitrogen conditions, binds to the phosphorylated forms of GLN3 and GAT1 and sequesters them in the cytoplasm, preventing transcription of genes expressed upon nitrogen limitation. Is also an atypical glutaredoxin without a catalytical cysteine residue. Has glutathione peroxidase and thiol:disulfide oxidoreductase activities in both native and fibrillar form. Also shows insulin disulfide reductase and dehydroascorbic acid reductase (DHAR) activities. This chain is Transcriptional regulator URE2 (URE2), found in Saccharomyces cerevisiae (strain ATCC 204508 / S288c) (Baker's yeast).